A 564-amino-acid chain; its full sequence is Ovochymase-2 (564 aa).

A signal peptide spans 1-22; sequence MLISRNKLILLLGIVFFERGKS. Positions 23 to 51 are cleaved as a propeptide — activation peptide; that stretch reads ATLSLPKAPSCGQSLVKVQPWNYFNIFSR. Positions 52–299 constitute a Peptidase S1 domain; it reads ILGGSQVEKG…VLPWIHEHIQ (248 aa). A disulfide bridge connects residues cysteine 77 and cysteine 93. Histidine 92 (charge relay system) is an active-site residue. N-linked (GlcNAc...) asparagine glycosylation is present at asparagine 104. Glutamate 119 lines the Ca(2+) pocket. The active-site Charge relay system is the aspartate 142. 5 disulfides stabilise this stretch: cysteine 176–cysteine 246, cysteine 207–cysteine 225, cysteine 236–cysteine 265, cysteine 311–cysteine 341, and cysteine 365–cysteine 384. Residue serine 240 is the Charge relay system of the active site. 2 CUB domains span residues 311–421 and 431–543; these read CSEQ…YKAL and CSYL…VSFI. Asparagine 415 and asparagine 451 each carry an N-linked (GlcNAc...) asparagine glycan. 2 disulfide bridges follow: cysteine 431-cysteine 458 and cysteine 485-cysteine 506. N-linked (GlcNAc...) asparagine glycosylation is present at asparagine 530.

Belongs to the peptidase S1 family.

The protein resides in the secreted. In terms of biological role, may be required for sperm ADAM3 processing and consequential sperm fertilizing ability. In vitro, has an endopeptidase activity. This chain is Ovochymase-2, found in Homo sapiens (Human).